The following is a 567-amino-acid chain: Urease subunit alpha (567 aa).

One can recognise a Urease domain in the interval 129-567 (GGIDAHIHFI…LPLAQLYCLF (439 aa)). Ni(2+) is bound by residues His-134, His-136, and Lys-217. The residue at position 217 (Lys-217) is an N6-carboxylysine. His-219 contacts substrate. Residues His-246 and His-272 each coordinate Ni(2+). The active-site Proton donor is His-320. Asp-360 is a Ni(2+) binding site.

The protein belongs to the metallo-dependent hydrolases superfamily. Urease alpha subunit family. In terms of assembly, heterotrimer of UreA (gamma), UreB (beta) and UreC (alpha) subunits. Three heterotrimers associate to form the active enzyme. It depends on Ni cation as a cofactor. Carboxylation allows a single lysine to coordinate two nickel ions.

The protein localises to the cytoplasm. The enzyme catalyses urea + 2 H2O + H(+) = hydrogencarbonate + 2 NH4(+). It participates in nitrogen metabolism; urea degradation; CO(2) and NH(3) from urea (urease route): step 1/1. This is Urease subunit alpha from Alteromonas mediterranea (strain DSM 17117 / CIP 110805 / LMG 28347 / Deep ecotype).